The chain runs to 177 residues: Inorganic pyrophosphatase (177 aa).

Residues Lys-29, Arg-43, and Tyr-55 each contribute to the substrate site. Residues Asp-65, Asp-70, and Asp-102 each contribute to the Mg(2+) site. Residue Tyr-141 coordinates substrate.

It belongs to the PPase family. As to quaternary structure, homohexamer. Mg(2+) serves as cofactor.

It is found in the cytoplasm. The enzyme catalyses diphosphate + H2O = 2 phosphate + H(+). Its function is as follows. Catalyzes the hydrolysis of inorganic pyrophosphate (PPi) forming two phosphate ions. The polypeptide is Inorganic pyrophosphatase (Aquifex pyrophilus).